A 175-amino-acid polypeptide reads, in one-letter code: MAEKRNIFLIGPMGAGKSTIGRQLAQLLSMDFVDSDNEIEQRAGADISWIFDVEGEDGFRKREERIINELTQRQGIVLSTGGGAVLSKENRNHLSARGIVIYLETTVEKQYQRTQRDKKRPLLQEVEDPRQVLEDLAKIRNPLYEEIADITLPTDEQSAKVMATQIVDLIDNLHG.

Position 14–19 (14–19 (GAGKST)) interacts with ATP. S18 lines the Mg(2+) pocket. Substrate-binding residues include D36, R60, and G82. ATP is bound at residue R120. R140 is a binding site for substrate. Q157 lines the ATP pocket.

This sequence belongs to the shikimate kinase family. In terms of assembly, monomer. It depends on Mg(2+) as a cofactor.

The protein localises to the cytoplasm. The catalysed reaction is shikimate + ATP = 3-phosphoshikimate + ADP + H(+). It functions in the pathway metabolic intermediate biosynthesis; chorismate biosynthesis; chorismate from D-erythrose 4-phosphate and phosphoenolpyruvate: step 5/7. Catalyzes the specific phosphorylation of the 3-hydroxyl group of shikimic acid using ATP as a cosubstrate. The chain is Shikimate kinase from Pasteurella multocida (strain Pm70).